The chain runs to 193 residues: Ion-translocating oxidoreductase complex subunit A (193 aa).

6 consecutive transmembrane segments (helical) span residues 5-25 (LLLF…FLGL), 39-59 (MGMG…AWLI), 63-83 (ILIP…VIAV), 102-122 (LLGI…VALL), 134-154 (ALYG…FAAI), and 171-191 (AIAL…SGLV).

This sequence belongs to the NqrDE/RnfAE family. In terms of assembly, the complex is composed of six subunits: RsxA, RsxB, RsxC, RsxD, RsxE and RsxG.

It is found in the cell inner membrane. In terms of biological role, part of a membrane-bound complex that couples electron transfer with translocation of ions across the membrane. Required to maintain the reduced state of SoxR. The chain is Ion-translocating oxidoreductase complex subunit A from Escherichia fergusonii (strain ATCC 35469 / DSM 13698 / CCUG 18766 / IAM 14443 / JCM 21226 / LMG 7866 / NBRC 102419 / NCTC 12128 / CDC 0568-73).